The following is a 699-amino-acid chain: Receptor-type tyrosine-protein phosphatase epsilon (699 aa).

Residues 1–19 form the signal peptide; it reads MEPFCPLLLASFSLSLARA. Over residues 20-36 the composition is skewed to low complexity; it reads GQGNDTTPTESNWTSTT. Residues 20–40 are disordered; sequence GQGNDTTPTESNWTSTTAGPP. At 20-45 the chain is on the extracellular side; sequence GQGNDTTPTESNWTSTTAGPPDPGAS. Asparagine 23 and asparagine 31 each carry an N-linked (GlcNAc...) asparagine glycan. The helical transmembrane segment at 46-68 threads the bilayer; sequence QPLLTWLLLPLLLLLFLLAAYFF. The Cytoplasmic segment spans residues 69–699; sequence RFRKQRKAVV…DIFSDYANFK (631 aa). 2 consecutive Tyrosine-protein phosphatase domains span residues 134–393 and 425–688; these read FREE…LLEY and LEEE…VQDF. Substrate is bound by residues aspartate 302, 334–340, and glutamine 378; that span reads CSAGVGR. Cysteine 334 acts as the Phosphocysteine intermediate in catalysis. Cysteine 629 acts as the Phosphocysteine intermediate in catalysis. Residue tyrosine 695 is modified to Phosphotyrosine.

This sequence belongs to the protein-tyrosine phosphatase family. Receptor class 4 subfamily. Monomer. Isoform 2: Homodimer. Can form oligomers. Dimerization is increased by oxidative stress and decreased by EGFR. Isoform 2 interacts with GRB2. Post-translationally, a catalytically active cytoplasmic form (p65) is produced by proteolytic cleavage of either isoform 1, isoform 2 or isoform 3. In terms of processing, phosphorylated on tyrosine residues by tyrosine kinase Neu. Glycosylated. In terms of tissue distribution, isoform 2 is expressed in the spleen and thymus (at protein level). Detected in fibroblasts, myeloid cells, macrophages, and T-cells but not in B-cell lines. Isoform 1 and isoform 2 are expressed predominantly in the brain, testes, and lungs, with lower levels present in lymph nodes, thymus, spleen, heart and mammary glands. Isoform 1 is expressed in osteoclasts and not in osteoblasts and its expression is related to osteoclast differentiation. It is also expressed in the erythrocytes. Isoform 2 is strongly expressed in skeletal muscle and L6 skeletal muscle cell line.

The protein resides in the cell membrane. It localises to the cytoplasm. The catalysed reaction is O-phospho-L-tyrosyl-[protein] + H2O = L-tyrosyl-[protein] + phosphate. Its activity is regulated as follows. Inhibited by alendronate (ALN), orthovanadate, and phenylarsine oxide (PAO). Acts as a negative regulator of insulin receptor (IR) signaling and is involved in insulin-induced glucose metabolism mainly through direct dephosphorylation and inactivation of IR in hepatocytes and liver. Plays a critical role in signaling transduction pathways and phosphoprotein network topology in red blood cells. May play a role in osteoclast formation and function. In terms of biological role, acts as a negative regulator of insulin receptor (IR) signaling in skeletal muscle. Regulates insulin-induced tyrosine phosphorylation of insulin receptor (IR) and insulin receptor substrate 1 (IRS-1), phosphorylation of protein kinase B and glycogen synthase kinase-3 and insulin induced stimulation of glucose uptake. Functionally, isoform 1 and isoform 2 act as a negative regulator of FceRI-mediated signal transduction leading to cytokine production and degranulation, most likely by acting at the level of SYK to affect downstream events such as phosphorylation of SLP76 and LAT and mobilization of Ca(2+). The polypeptide is Receptor-type tyrosine-protein phosphatase epsilon (Ptpre) (Mus musculus (Mouse)).